Here is a 904-residue protein sequence, read N- to C-terminus: Disks large homolog 1 (904 aa).

An L27 domain is found at 4-64 (RKQDTQRALH…FYEVTLLDNP (61 aa)). The residue at position 115 (T115) is a Phosphothreonine. Phosphoserine occurs at positions 122, 138, and 158. The tract at residues 162–212 (PTEAVLPSPPTVPVIPVLPVPAENTVILPTIPQANPPPVLVNTDSLETPTY) is interaction with SH3 domains. 3 PDZ domains span residues 224–310 (EITL…VKRR), 319–405 (EIKL…VAKP), and 466–546 (KVVL…AQYR). A required for interaction with MARCHF2 region spans residues 224–546 (EITLERGNSG…QAVTIVAQYR (323 aa)). Phosphoserine is present on S232. Y399 bears the Phosphotyrosine mark. Phosphoserine is present on residues S568, S573, S575, S579, S598, S619, S676, S684, S687, Q709, and S834. The 71-residue stretch at 581–651 (KRSLYVRALF…PSKRRVEKKE (71 aa)) folds into the SH3 domain. Positions 662–693 (SKTRDKGEIPDDMGSKGLKHVTSNASDSESSY) are disordered. A compositionally biased stretch (polar residues) spans 682-693 (VTSNASDSESSY). A Guanylate kinase-like domain is found at 714 to 889 (TRPVIILGPM…IYNQVKQIIE (176 aa)).

Belongs to the MAGUK family. In terms of assembly, homotetramer. Interacts (via guanylate kinase-like domain) with DLGAP1, DLGAP2, DLGAP3, DLGAP4 and MAP1A. Interacts (via guanylate kinase-like domain) with KIF13B. May interact with HTR2A. Interacts (via PDZ domains) with GRIA1. Interacts (via PDZ domains) with GRIN2A. Interacts (via PDZ domains) with KCND2 and KCND3. Interacts (via PDZ domains) with KCNA1, KCNA2, KCNA3 and KCNA4. Interacts (via PDZ domains) with ADGRA3. Interacts with KCNF1. Interacts with CAMK2. Interacts with cytoskeleton-associated protein EPB41. Interacts with cytoskeleton-associated protein EZR. Found in a complex with KCNA5 and CAV3. Found in a complex with APC and CTNNB1. Interacts (via PDZ domains) with APC. Interacts with CDH1 through binding to PIK3R1. Forms multiprotein complexes with CASK, LIN7A, LIN7B, LIN7C, APBA1, and KCNJ12. Interacts with TOPK. Forms a tripartite complex composed of DLG1, MPP7 and LIN7 (LIN7A or LIN7C). May interact with TJAP1. Interacts with PTEN. Interacts with FRMPD4 (via C-terminus). Interacts with LRFN1, LRFN2 and LRFN4. Interacts with SFPQ. Interacts (via PDZ domains) with ADGRA2 (via PDZ-binding motif). Interacts with ADAM10; this interaction recruits ADAM10 to the cell membrane during long-term depression in hippocampal neurons. Interacts with DGKI (via PDZ-binding motif). Interacts (via PDZ domains) with MARCHF2 (via PDZ domain); the interaction leads to DLG1 ubiqtuitination and degradation. Interacts (via N-terminus) with MPP3; this interaction connects CADM1 with DLG1 and links CADM1 with the regulatory subunit of phosphoinositide-3-kinase (PI3K) by forming a multiprotein complex and participates in cell spreading. As to quaternary structure, (Microbial infection) Interacts with HTLV-1 protein Tax. (Microbial infection) Interacts (via PDZ domains 1 and 2) with influenza A virus protein NS1; the interaction results in the translocation of DLG1 from the cell membrane to perinuclear puncta. Acts as a scaffold protein to facilitate the interaction between LIN7C and influenza A virus protein NS1; the interaction facilitates translocation of LIN7C to cytoplasmic puncta. In terms of assembly, (Microbial infection) Interacts with human papillomavirus 18/HPV-18 protein E6. Phosphorylated by MAPK12. Phosphorylation of Ser-232 regulates association with GRIN2A. Post-translationally, ubiquitinated; by MARCHF2 which results in its degradation. As to expression, abundantly expressed in atrial myocardium (at protein level). Expressed in lung fibroblasts, cervical epithelial and B-cells (at protein level). Expressed in the brain (at protein level). Widely expressed, with isoforms displaying different expression profiles.

The protein resides in the cell membrane. Its subcellular location is the basolateral cell membrane. It localises to the endoplasmic reticulum membrane. It is found in the postsynaptic density. The protein localises to the synapse. The protein resides in the sarcolemma. Its subcellular location is the apical cell membrane. It localises to the cell junction. It is found in the cytoplasm. Essential multidomain scaffolding protein required for normal development. Recruits channels, receptors and signaling molecules to discrete plasma membrane domains in polarized cells. Promotes epithelial cell layer barrier function via maintaining cell-cell adhesion. May also play a role in adherens junction assembly, signal transduction, cell proliferation, synaptogenesis and lymphocyte activation. Regulates the excitability of cardiac myocytes by modulating the functional expression of Kv4 channels. Functional regulator of Kv1.5 channel. During long-term depression in hippocampal neurons, it recruits ADAM10 to the plasma membrane. This chain is Disks large homolog 1, found in Homo sapiens (Human).